We begin with the raw amino-acid sequence, 93 residues long: Exodeoxyribonuclease 7 small subunit (93 aa).

The interval 1–22 (MAKTASPGATPPGNGAEPLPDN) is disordered.

It belongs to the XseB family. Heterooligomer composed of large and small subunits.

Its subcellular location is the cytoplasm. The catalysed reaction is Exonucleolytic cleavage in either 5'- to 3'- or 3'- to 5'-direction to yield nucleoside 5'-phosphates.. In terms of biological role, bidirectionally degrades single-stranded DNA into large acid-insoluble oligonucleotides, which are then degraded further into small acid-soluble oligonucleotides. This is Exodeoxyribonuclease 7 small subunit from Burkholderia multivorans (strain ATCC 17616 / 249).